A 942-amino-acid polypeptide reads, in one-letter code: DNA polymerase I (942 aa).

The region spanning 177–269 (EPDQLADLRG…LEAARIGVYD (93 aa)) is the 5'-3' exonuclease domain. The 183-residue stretch at 340–522 (TIVRDATALA…LTERLQRQLE (183 aa)) folds into the 3'-5' exonuclease domain.

This sequence belongs to the DNA polymerase type-A family. In terms of assembly, single-chain monomer with multiple functions.

It catalyses the reaction DNA(n) + a 2'-deoxyribonucleoside 5'-triphosphate = DNA(n+1) + diphosphate. In addition to polymerase activity, this DNA polymerase exhibits 3'-5' and 5'-3' exonuclease activity. The sequence is that of DNA polymerase I (polA) from Chloroflexus aurantiacus (strain ATCC 29366 / DSM 635 / J-10-fl).